Consider the following 139-residue polypeptide: Large-conductance mechanosensitive channel (139 aa).

The next 2 membrane-spanning stretches (helical) occupy residues 9-29 (AFAV…GAAF) and 79-99 (IQTV…VKAI).

The protein belongs to the MscL family. In terms of assembly, homopentamer.

It is found in the cell inner membrane. Channel that opens in response to stretch forces in the membrane lipid bilayer. May participate in the regulation of osmotic pressure changes within the cell. The sequence is that of Large-conductance mechanosensitive channel from Pseudomonas putida (strain ATCC 700007 / DSM 6899 / JCM 31910 / BCRC 17059 / LMG 24140 / F1).